Consider the following 514-residue polypeptide: CENP-B homolog protein 1 (514 aa).

The HTH CENPB-type domain maps to 69–144; it reads DIKKIRAPKF…RRRHYIQQSA (76 aa).

It localises to the nucleus. The protein localises to the chromosome. Its subcellular location is the centromere. Its function is as follows. Binds to centromeric K-type repeat DNA and ARS3002 DNA. The CBH-binding consensus sequence is Py-Pu-A-T-A-T-Py-Pu-T-A. The chain is CENP-B homolog protein 1 (cbh1) from Schizosaccharomyces pombe (strain 972 / ATCC 24843) (Fission yeast).